The following is a 69-amino-acid chain: UPF0337 protein YjbJ (69 aa).

It belongs to the UPF0337 (CsbD) family.

The polypeptide is UPF0337 protein YjbJ (yjbJ) (Escherichia coli O6:H1 (strain CFT073 / ATCC 700928 / UPEC)).